The sequence spans 692 residues: Elongation factor G (692 aa).

The 275-residue stretch at 8–282 (ENTRNIGIMA…AVIDYLPSPL (275 aa)) folds into the tr-type G domain. GTP contacts are provided by residues 17-24 (AHIDAGKT), 81-85 (DTPGH), and 135-138 (NKMD).

Belongs to the TRAFAC class translation factor GTPase superfamily. Classic translation factor GTPase family. EF-G/EF-2 subfamily.

The protein resides in the cytoplasm. Catalyzes the GTP-dependent ribosomal translocation step during translation elongation. During this step, the ribosome changes from the pre-translocational (PRE) to the post-translocational (POST) state as the newly formed A-site-bound peptidyl-tRNA and P-site-bound deacylated tRNA move to the P and E sites, respectively. Catalyzes the coordinated movement of the two tRNA molecules, the mRNA and conformational changes in the ribosome. The sequence is that of Elongation factor G from Bacillus mycoides (strain KBAB4) (Bacillus weihenstephanensis).